Reading from the N-terminus, the 177-residue chain is Translation initiation factor IF-3 (177 aa).

Belongs to the IF-3 family. As to quaternary structure, monomer.

It localises to the cytoplasm. Its function is as follows. IF-3 binds to the 30S ribosomal subunit and shifts the equilibrium between 70S ribosomes and their 50S and 30S subunits in favor of the free subunits, thus enhancing the availability of 30S subunits on which protein synthesis initiation begins. The chain is Translation initiation factor IF-3 from Elusimicrobium minutum (strain Pei191).